Here is a 626-residue protein sequence, read N- to C-terminus: Chaperone protein HtpG (626 aa).

The segment at 1 to 338 is a; substrate-binding; the sequence is MTANKNQKKT…SNDLPLNVSR (338 aa). A b region spans residues 339–553; that stretch reads EILQDHKLVY…SNEMSTQMAK (215 aa). Residues 554 to 626 are c; sequence LFSAAGQTVP…ARINDLLINN (73 aa).

The protein belongs to the heat shock protein 90 family. As to quaternary structure, homodimer.

The protein resides in the cytoplasm. In terms of biological role, molecular chaperone. Has ATPase activity. The polypeptide is Chaperone protein HtpG (Buchnera aphidicola subsp. Baizongia pistaciae (strain Bp)).